Here is a 398-residue protein sequence, read N- to C-terminus: Chalcone synthase (398 aa).

The active site involves cysteine 167.

It belongs to the thiolase-like superfamily. Chalcone/stilbene synthases family.

It carries out the reaction (E)-4-coumaroyl-CoA + 3 malonyl-CoA + 3 H(+) = 2',4,4',6'-tetrahydroxychalcone + 3 CO2 + 4 CoA. It participates in secondary metabolite biosynthesis; flavonoid biosynthesis. Functionally, the primary product of this enzyme is 4,2',4',6'-tetrahydroxychalcone (also termed naringenin-chalcone or chalcone) which can under specific conditions spontaneously isomerize into naringenin. The sequence is that of Chalcone synthase (CHS) from Callistephus chinensis (China aster).